The chain runs to 97 residues: uncharacterized protein (97 aa).

2 disordered regions span residues 1 to 20 (MTEG…IASD) and 52 to 97 (VPAA…GRRA).

This is an uncharacterized protein from Paracoccus pantotrophus (Thiosphaera pantotropha).